The primary structure comprises 599 residues: Elongation factor 4 (599 aa).

The tr-type G domain maps to 4–186; sequence KFIRNFSIIA…AIIKHVPPPL (183 aa). Residues 16-21 and 133-136 each bind GTP; these read DHGKST and NKID.

Belongs to the TRAFAC class translation factor GTPase superfamily. Classic translation factor GTPase family. LepA subfamily.

It is found in the cell membrane. The enzyme catalyses GTP + H2O = GDP + phosphate + H(+). In terms of biological role, required for accurate and efficient protein synthesis under certain stress conditions. May act as a fidelity factor of the translation reaction, by catalyzing a one-codon backward translocation of tRNAs on improperly translocated ribosomes. Back-translocation proceeds from a post-translocation (POST) complex to a pre-translocation (PRE) complex, thus giving elongation factor G a second chance to translocate the tRNAs correctly. Binds to ribosomes in a GTP-dependent manner. The sequence is that of Elongation factor 4 from Ureaplasma urealyticum serovar 10 (strain ATCC 33699 / Western).